Here is a 906-residue protein sequence, read N- to C-terminus: Formin-like protein 18 (906 aa).

A signal peptide spans 1-25; sequence MSKLRWLIMAFLVCLLLLTPKDLEG. A helical membrane pass occupies residues 120 to 140; that stretch reads MVVVGLSAACVALVTLVGICF. Disordered stretches follow at residues 267–416 and 854–906; these read AGGG…QADP and NAKA…DSDD. Positions 274–292 are enriched in pro residues; that stretch reads AAPPPPAGPPPPAPPPLPP. Basic residues predominate over residues 293–303; that stretch reads SHHHHHGHHPP. Composition is skewed to pro residues over residues 320–339, 348–375, and 383–402; these read APPP…PAPS, GPPP…PPPG, and GPPP…PPFK. 2 stretches are compositionally biased toward low complexity: residues 403–416 and 854–877; these read KSPG…QADP and NAKA…QSSF. The region spanning 411–866 is the FH2 domain; the sequence is AAQADPNKAK…AKKQQQPTPA (456 aa). Basic and acidic residues predominate over residues 878–889; it reads RDPRQQIQDRRA. Residues 897–906 show a composition bias toward low complexity; the sequence is SSSSSSDSDD.

This sequence belongs to the formin-like family. Class-I subfamily.

Its subcellular location is the membrane. The protein is Formin-like protein 18 (FH18) of Oryza sativa subsp. japonica (Rice).